Reading from the N-terminus, the 184-residue chain is Large ribosomal subunit protein bL9 (184 aa).

The tract at residues 160–184 is disordered; that stretch reads LQNQKSEQQEAEQDANKEAADGDDS. Residues 173 to 184 are compositionally biased toward basic and acidic residues; it reads DANKEAADGDDS.

The protein belongs to the bacterial ribosomal protein bL9 family.

Binds to the 23S rRNA. This is Large ribosomal subunit protein bL9 from Wolbachia sp. subsp. Drosophila simulans (strain wRi).